Consider the following 232-residue polypeptide: Large ribosomal subunit protein uL1 (232 aa).

Belongs to the universal ribosomal protein uL1 family. In terms of assembly, part of the 50S ribosomal subunit.

Binds directly to 23S rRNA. The L1 stalk is quite mobile in the ribosome, and is involved in E site tRNA release. Functionally, protein L1 is also a translational repressor protein, it controls the translation of the L11 operon by binding to its mRNA. In Aliarcobacter butzleri (strain RM4018) (Arcobacter butzleri), this protein is Large ribosomal subunit protein uL1.